The sequence spans 382 residues: Inactive ubiquitin-specific protease 5 (382 aa).

The 126-residue stretch at 16 to 141 (VPAEEERALI…GGPTLPRKAI (126 aa)) folds into the DUSP domain. The 60-residue stretch at 323-382 (TGLLNLGNTCFMNSAIQCLVHTPEFARYFREDYHREINWQNPLGMVVSTLSTSMALKPYV) folds into the USP domain.

It belongs to the peptidase C19 family. Widely expressed with the highest expression in floral organs.

It localises to the cell membrane. Its function is as follows. Plays an important role in the development of floral organs and chloroplasts. Does not possess deubiquitinating enzyme activity in vitro. This chain is Inactive ubiquitin-specific protease 5, found in Oryza sativa subsp. japonica (Rice).